The sequence spans 1125 residues: Probable phospholipid-transporting ATPase IIB (1125 aa).

Residues 1–131 lie on the Cytoplasmic side of the membrane; sequence MADGIPLNPV…IKNQKYNIVT (131 aa). Residues 132-152 form a helical membrane-spanning segment; that stretch reads FVPGVLYQQFKFFLNLYFLVV. Topologically, residues 153-161 are extracellular; the sequence is ACSQFVPSL. The chain crosses the membrane as a helical span at residues 162–182; the sequence is KIGYLYTYWAPLGFVLAVTMV. The Cytoplasmic segment spans residues 183–369; it reads REAVDEVRRC…LDLELNRLTK (187 aa). Residues 370-390 traverse the membrane as a helical segment; that stretch reads ALFLAQVVLSVVMVALQGFLG. The Extracellular portion of the chain corresponds to 391–395; the sequence is PWFRN. The helical transmembrane segment at 396-415 threads the bilayer; the sequence is LFRFVVLFSYIIPISLRVNL. Topologically, residues 416 to 928 are cytoplasmic; that stretch reads DMGKSAYGWM…ALGQFVMHRG (513 aa). Asp455 functions as the 4-aspartylphosphate intermediate in the catalytic mechanism. Residues Asp455, Lys456, and Thr457 each contribute to the ATP site. Mg(2+) is bound at residue Asp455. Thr457 is a Mg(2+) binding site. Over residues 500–511 the composition is skewed to low complexity; the sequence is QSNGSSASSTPS. Disordered stretches follow at residues 500–525 and 552–574; these read QSNG…RKSV and GANA…RTYQ. Residues 558-567 show a composition bias toward acidic residues; the sequence is ESTEADQDFS. ATP contacts are provided by Glu580, Phe622, Lys627, Lys646, Arg675, Thr676, Thr755, Gly756, Asp757, Arg837, and Lys843. Position 863 (Asp863) interacts with Mg(2+). Residues Asn866 and Asp867 each coordinate ATP. Asp867 provides a ligand contact to Mg(2+). The chain crosses the membrane as a helical span at residues 929 to 949; sequence MIISTMQAVFSSIFYFASVPL. At 950 to 951 the chain is on the extracellular side; that stretch reads YQ. A helical transmembrane segment spans residues 952–972; it reads GFLMVGYATIYTMFPVFSLVL. At 973 to 1001 the chain is on the cytoplasmic side; that stretch reads DQDVKPEMALLYPELYKDLTKGRSLSFKT. A helical transmembrane segment spans residues 1002-1022; it reads FLIWVLISIYQGGILMYGALV. The Extracellular portion of the chain corresponds to 1023–1030; it reads LFDQEFVH. Residues 1031 to 1051 form a helical membrane-spanning segment; the sequence is VVAISFTALILTELLMVALTI. Topologically, residues 1052 to 1055 are cytoplasmic; that stretch reads RTWH. The chain crosses the membrane as a helical span at residues 1056–1076; it reads WLMVVAQLISLACYLASLAFL. Residues 1077–1088 are Extracellular-facing; it reads NEYFDLSFITTR. A helical membrane pass occupies residues 1089–1109; it reads VFLWKVCVITLVSCLPLYIIK. At 1110–1125 the chain is on the cytoplasmic side; that stretch reads YLKRKFSPPSYSKLSS.

Belongs to the cation transport ATPase (P-type) (TC 3.A.3) family. Type IV subfamily. Requires Mg(2+) as cofactor.

It is found in the golgi apparatus. The protein localises to the trans-Golgi network membrane. It catalyses the reaction ATP + H2O + phospholipidSide 1 = ADP + phosphate + phospholipidSide 2.. This is Probable phospholipid-transporting ATPase IIB (atp9b) from Danio rerio (Zebrafish).